The following is a 178-amino-acid chain: Probable chorismate pyruvate-lyase (178 aa).

Residues Arg72, Leu110, and Glu169 each contribute to the substrate site.

The protein belongs to the UbiC family.

It is found in the cytoplasm. It carries out the reaction chorismate = 4-hydroxybenzoate + pyruvate. It functions in the pathway cofactor biosynthesis; ubiquinone biosynthesis. Removes the pyruvyl group from chorismate, with concomitant aromatization of the ring, to provide 4-hydroxybenzoate (4HB) for the ubiquinone pathway. The protein is Probable chorismate pyruvate-lyase of Nitrosomonas eutropha (strain DSM 101675 / C91 / Nm57).